The primary structure comprises 701 residues: Long chain acyl-CoA synthetase 6, peroxisomal (701 aa).

Residues 1-38 constitute a propeptide, removed in mature form; that stretch reads MDSSSSSSSAAARRRINAIHSHLVTSSRSSPLLRSNPT. The Microbody targeting signal motif lies at 15–23; sequence RINAIHSHL. 266–277 contacts ATP; the sequence is ICYTSGTTGTPK. The segment at 526–550 is fatty acid-binding; that stretch reads DGWLHTGDIGLWLPGGRLKIIDRKK.

This sequence belongs to the ATP-dependent AMP-binding enzyme family. Mg(2+) is required as a cofactor. Expressed in roots, stems, leaves flowers and germinating seedling. Preferentially expressed in seeds and senescent leaves.

It is found in the peroxisome. The protein resides in the glyoxysome membrane. The enzyme catalyses a long-chain fatty acid + ATP + CoA = a long-chain fatty acyl-CoA + AMP + diphosphate. It catalyses the reaction tetradecanoate + ATP + CoA = tetradecanoyl-CoA + AMP + diphosphate. It carries out the reaction hexadecanoate + ATP + CoA = hexadecanoyl-CoA + AMP + diphosphate. The catalysed reaction is (9Z)-octadecenoate + ATP + CoA = (9Z)-octadecenoyl-CoA + AMP + diphosphate. The enzyme catalyses (9Z,12Z)-octadecadienoate + ATP + CoA = (9Z,12Z)-octadecadienoyl-CoA + AMP + diphosphate. It catalyses the reaction (9Z,12Z,15Z)-octadecatrienoate + ATP + CoA = (9Z,12Z,15Z)-octadecatrienoyl-CoA + AMP + diphosphate. It participates in lipid metabolism; fatty acid metabolism. In terms of biological role, activation of long-chain fatty acids for both synthesis of cellular lipids, and degradation via beta-oxidation. Preferentially uses palmitate, palmitoleate, oleate, linoleate and eicosenoate as substrates. Can use myristate and linolenate as substrates. May play a regulatory role both in fatty acid import into glyoxysomes and in fatty acid beta-oxidation. Functions redundantly with LACS7 in lipid mobilization for beta-oxidation during seed germination, which is essential for postgerminative growth and seedling establishment. This Arabidopsis thaliana (Mouse-ear cress) protein is Long chain acyl-CoA synthetase 6, peroxisomal.